The primary structure comprises 345 residues: Beta-2-glycoprotein 1 (345 aa).

Residues 1-19 form the signal peptide; the sequence is MISPVLILFSSFLCHVAIA. Sushi domains follow at residues 21 to 81, 82 to 139, 140 to 202, and 203 to 262; these read RTCP…KCTP, RVCP…VCAP, IICP…ECRE, and VKCP…SCKA. 11 disulfide bridges follow: C23/C66, C51/C79, C84/C124, C110/C137, C142/C188, C174/C200, C205/C248, C234/C260, C264/C315, C300/C325, and C307/C345. A glycan (O-linked (GalNAc...) threonine) is linked at T33. The O-linked (GalNAc...) threonine glycan is linked to T149. Residue N162 is glycosylated (N-linked (GlcNAc...) (complex) asparagine). 2 N-linked (GlcNAc...) asparagine glycosylation sites follow: N183 and N193. Residue N253 is glycosylated (N-linked (GlcNAc...) asparagine). Residues 263 to 345 are sushi-like; the sequence is SCKVPVKKAT…KTDASDVKPC (83 aa).

In terms of processing, N- and O-glycosylated. PubMed:6587378 also reports glycosylation on 'Asn-188' for their allele. As to expression, expressed by the liver and secreted in plasma.

It is found in the secreted. Its function is as follows. Binds to various kinds of negatively charged substances such as heparin, phospholipids, and dextran sulfate. May prevent activation of the intrinsic blood coagulation cascade by binding to phospholipids on the surface of damaged cells. In Homo sapiens (Human), this protein is Beta-2-glycoprotein 1 (APOH).